Reading from the N-terminus, the 243-residue chain is Terpene cyclase ptmB (243 aa).

3 helical membrane-spanning segments follow: residues Ile-19–Ile-39, Tyr-48–Ile-68, and Gly-78–Ala-98. The N-linked (GlcNAc...) asparagine glycan is linked to Asn-111. The next 4 membrane-spanning stretches (helical) occupy residues Leu-112 to Ala-132, Ser-137 to Cys-157, Leu-172 to Trp-194, and Leu-205 to Trp-225.

It belongs to the paxB family.

The protein resides in the membrane. It participates in secondary metabolite biosynthesis. In terms of biological role, terpene cyclase; part of the gene cluster that mediates the biosynthesis of the indole diterpenes penitrems. The geranylgeranyl diphosphate (GGPP) synthase ptmG catalyzes the first step in penitrem biosynthesis via conversion of farnesyl pyrophosphate and isopentyl pyrophosphate into geranylgeranyl pyrophosphate (GGPP). Condensation of indole-3-glycerol phosphate with GGPP by the prenyl transferase ptmC then forms 3-geranylgeranylindole (3-GGI). Epoxidation by the FAD-dependent monooxygenase ptmM leads to a epoxidized-GGI that is substrate of the terpene cyclase ptmB for cyclization to yield paspaline. Paspaline is subsequently converted to 13-desoxypaxilline by the cytochrome P450 monooxygenase ptmP, the latter being then converted to paxilline by the cytochrome P450 monooxygenase ptmQ. Paxilline is converted to beta-paxitriol via C-10 ketoreduction by the short-chain dehydrogenase ptmH which can be monoprenylated at the C-20 by the indole diterpene prenyltransferase ptmD. A two-step elimination (acetylation and elimination) process performed by the O-acetyltransferase ptmV and ptmI leads to the production of the prenylated form of penijanthine. The FAD-linked oxidoreductase ptmO then converts the prenylated form of penijanthine into PC-M5 which is in turn transformed into PC-M4 by the aromatic dimethylallyltransferase ptmE. Five sequential oxidative transformations performed by the cytochrome P450 monooxygenases ptmK, ptmU, ptmL, ptmN and ptmJ yield the various penitrem compounds. PtmK, ptmU and ptmM are involved in the formation of the key bicyclic ring of penitrem C via the formation of the intermediates secopenitrem D and penitrem D. PtmL catalyzes the epoxidation of penitrem D and C to yield penitrem B and F, respectively. PtmJ catalyzes the last benzylic hydroxylation to convert penitrem B to prenitrem E and penitrem F to penitrem A. This Penicillium ochrochloron protein is Terpene cyclase ptmB.